A 224-amino-acid polypeptide reads, in one-letter code: 2,5-diamino-6-ribosylamino-4(3H)-pyrimidinone 5'-phosphate reductase (224 aa).

Residues G16, T57, D61, 83 to 86 (SKLR), V134, and 156 to 159 (GGTL) each bind NADP(+).

This sequence belongs to the HTP reductase family. As to quaternary structure, homodimer.

It catalyses the reaction 2,5-diamino-6-(1-D-ribitylamino)pyrimidin-4(3H)-one 5'-phosphate + NADP(+) = 2,5-diamino-6-(1-D-ribosylamino)pyrimidin-4(3H)-one 5'-phosphate + NADPH + H(+). The catalysed reaction is 2,5-diamino-6-(1-D-ribitylamino)pyrimidin-4(3H)-one 5'-phosphate + NAD(+) = 2,5-diamino-6-(1-D-ribosylamino)pyrimidin-4(3H)-one 5'-phosphate + NADH + H(+). Its pathway is cofactor biosynthesis; riboflavin biosynthesis. In terms of biological role, catalyzes an early step in riboflavin biosynthesis, the NAD(P)H-dependent reduction of the ribose side chain of 2,5-diamino-6-ribosylamino-4(3H)-pyrimidinone 5'-phosphate, yielding 2,5-diamino-6-ribitylamino-4(3H)-pyrimidinone 5'-phosphate. The beta anomer is the authentic substrate, and the alpha anomer can serve as substrate subsequent to spontaneous anomerization. NADPH and NADH function equally well as the reductants. Does not catalyze the reduction of 5-amino-6-(5-phospho-D-ribosylamino)uracil to 5-amino-6-(5-phospho-D-ribitylamino)uracil. This chain is 2,5-diamino-6-ribosylamino-4(3H)-pyrimidinone 5'-phosphate reductase (arfC), found in Methanocaldococcus jannaschii (strain ATCC 43067 / DSM 2661 / JAL-1 / JCM 10045 / NBRC 100440) (Methanococcus jannaschii).